The chain runs to 438 residues: GDP-mannose 6-dehydrogenase (438 aa).

NAD(+) is bound by residues Tyr10, Val11, Asp30, Lys35, Thr86, and Thr124. Positions 161, 210, 214, 217, 225, 256, 257, 259, 262, and 265 each coordinate GDP-alpha-D-mannuronate. Cys268 is an active-site residue. Lys271 contributes to the NAD(+) binding site. Position 324 (Lys324) interacts with GDP-alpha-D-mannuronate. Arg331 is an NAD(+) binding site.

It belongs to the UDP-glucose/GDP-mannose dehydrogenase family.

It carries out the reaction GDP-alpha-D-mannose + 2 NAD(+) + H2O = GDP-alpha-D-mannuronate + 2 NADH + 3 H(+). It participates in glycan biosynthesis; alginate biosynthesis. Catalyzes the oxidation of guanosine diphospho-D-mannose (GDP-D-mannose) to GDP-D-mannuronic acid, a precursor for alginate polymerization. The alginate layer causes a mucoid phenotype and provides a protective barrier against host immune defenses and antibiotics. In Pseudomonas syringae pv. tomato (strain ATCC BAA-871 / DC3000), this protein is GDP-mannose 6-dehydrogenase (algD).